A 514-amino-acid chain; its full sequence is Peptide chain release factor 3 (514 aa).

The tr-type G domain maps to 8–268 (KKRRTFAIIS…TFLEFAPEPH (261 aa)). GTP is bound by residues 17–24 (SHPDAGKT), 85–89 (DTPGH), and 139–142 (NKLD).

The protein belongs to the TRAFAC class translation factor GTPase superfamily. Classic translation factor GTPase family. PrfC subfamily.

It is found in the cytoplasm. Increases the formation of ribosomal termination complexes and stimulates activities of RF-1 and RF-2. It binds guanine nucleotides and has strong preference for UGA stop codons. It may interact directly with the ribosome. The stimulation of RF-1 and RF-2 is significantly reduced by GTP and GDP, but not by GMP. The polypeptide is Peptide chain release factor 3 (Streptococcus pyogenes serotype M1).